Here is a 351-residue protein sequence, read N- to C-terminus: Trans-enoyl reductase grgB (351 aa).

One can recognise an Enoyl reductase (ER) domain in the interval glycine 10–valine 346. NADP(+) is bound by residues alanine 161 to threonine 164, serine 184 to asparagine 187, tyrosine 202, leucine 249 to glutamate 250, and valine 339 to histidine 340.

Belongs to the zinc-containing alcohol dehydrogenase family.

Its pathway is secondary metabolite biosynthesis. Functionally, trans-enoyl reductase; part of the gene cluster that mediates the biosynthesis of gregatin A, a fungal polyketide featuring an alkylated furanone core. The PKS grgA synthesizes C11 and C4 polyketide chains in the presence and absence of the trans-enoyl reductase grgB, respectively. The polyketide transferase grgF is then responsible for the fusion of the two carbon chains to produce the furanone skeleton of gregatin A. Next, the cytochrome P450 monooxygenase grgG accepts performs the oxidative cyclization to furnish the gregatin scaffold and leads to the formation of desmethylgregatin A. Finally, the O-methyltransferase grgD methylates the carboxyl group of desmethylgregatin A to provide gregatin A. The sequence is that of Trans-enoyl reductase grgB from Penicillium sp.